Consider the following 135-residue polypeptide: QFGNYYQPQPTYSPPARQQVPILQYSNEVNPDGSYAYSYQTGNGIAAQEQGYLKNPGQRDLEAENVQGTFSYTAPDGTPISLRYVADENGFRAEGAHLPTPPPIPEAIARSLEVIARTPQQPFQPQPQYNPFRRF.

Glutamine 1 carries the post-translational modification Pyrrolidone carboxylic acid. Threonine 11 and threonine 100 each carry an O-linked (HexNAc...) threonine glycan. Residues 32–102 (DGSYAYSYQT…AEGAHLPTPP (71 aa)) enclose the Chitin-binding type R&amp;R domain.

Component of the abdominal endocuticle. This chain is Endocuticle structural glycoprotein SgAbd-2, found in Schistocerca gregaria (Desert locust).